The following is a 242-amino-acid chain: Large ribosomal subunit protein uL1 (242 aa).

This sequence belongs to the universal ribosomal protein uL1 family. Part of the 50S ribosomal subunit.

Functionally, binds directly to 23S rRNA. The L1 stalk is quite mobile in the ribosome, and is involved in E site tRNA release. Its function is as follows. Protein L1 is also a translational repressor protein, it controls the translation of the L11 operon by binding to its mRNA. The chain is Large ribosomal subunit protein uL1 from Streptomyces virginiae (Streptomyces cinnamonensis).